The sequence spans 342 residues: 3-isopropylmalate dehydrogenase (342 aa).

Substrate contacts are provided by R92, R102, R126, and D216. Residues D216, D240, and D244 each contribute to the Mg(2+) site. 276–288 contributes to the NAD(+) binding site; it reads GSAPDIAGKGIAD.

It belongs to the isocitrate and isopropylmalate dehydrogenases family. LeuB type 2 subfamily. Homodimer. Mg(2+) is required as a cofactor. It depends on Mn(2+) as a cofactor.

Its subcellular location is the cytoplasm. It catalyses the reaction (2R,3S)-3-isopropylmalate + NAD(+) = 4-methyl-2-oxopentanoate + CO2 + NADH. It participates in amino-acid biosynthesis; L-leucine biosynthesis; L-leucine from 3-methyl-2-oxobutanoate: step 3/4. Its function is as follows. Catalyzes the oxidation of 3-carboxy-2-hydroxy-4-methylpentanoate (3-isopropylmalate) to 3-carboxy-4-methyl-2-oxopentanoate. The product decarboxylates to 4-methyl-2 oxopentanoate. The polypeptide is 3-isopropylmalate dehydrogenase (Corynebacterium kroppenstedtii (strain DSM 44385 / JCM 11950 / CIP 105744 / CCUG 35717)).